The primary structure comprises 319 residues: Aspartate carbamoyltransferase catalytic subunit (319 aa).

Carbamoyl phosphate contacts are provided by Arg57 and Thr58. Lys85 is a binding site for L-aspartate. Arg107, His135, and Gln138 together coordinate carbamoyl phosphate. Residues Arg168 and Arg222 each contribute to the L-aspartate site. 2 residues coordinate carbamoyl phosphate: Gly263 and Pro264.

Belongs to the aspartate/ornithine carbamoyltransferase superfamily. ATCase family. In terms of assembly, heterododecamer (2C3:3R2) of six catalytic PyrB chains organized as two trimers (C3), and six regulatory PyrI chains organized as three dimers (R2).

The catalysed reaction is carbamoyl phosphate + L-aspartate = N-carbamoyl-L-aspartate + phosphate + H(+). It participates in pyrimidine metabolism; UMP biosynthesis via de novo pathway; (S)-dihydroorotate from bicarbonate: step 2/3. Its function is as follows. Catalyzes the condensation of carbamoyl phosphate and aspartate to form carbamoyl aspartate and inorganic phosphate, the committed step in the de novo pyrimidine nucleotide biosynthesis pathway. The chain is Aspartate carbamoyltransferase catalytic subunit from Paracoccus denitrificans (strain Pd 1222).